An 85-amino-acid polypeptide reads, in one-letter code: Small ribosomal subunit protein uS17 (85 aa).

It belongs to the universal ribosomal protein uS17 family. Part of the 30S ribosomal subunit.

One of the primary rRNA binding proteins, it binds specifically to the 5'-end of 16S ribosomal RNA. This is Small ribosomal subunit protein uS17 from Acetivibrio thermocellus (strain ATCC 27405 / DSM 1237 / JCM 9322 / NBRC 103400 / NCIMB 10682 / NRRL B-4536 / VPI 7372) (Clostridium thermocellum).